The chain runs to 418 residues: NADH-quinone oxidoreductase subunit D (418 aa).

This sequence belongs to the complex I 49 kDa subunit family. NDH-1 is composed of 14 different subunits. Subunits NuoB, C, D, E, F, and G constitute the peripheral sector of the complex.

Its subcellular location is the cell inner membrane. The enzyme catalyses a quinone + NADH + 5 H(+)(in) = a quinol + NAD(+) + 4 H(+)(out). Functionally, NDH-1 shuttles electrons from NADH, via FMN and iron-sulfur (Fe-S) centers, to quinones in the respiratory chain. The immediate electron acceptor for the enzyme in this species is believed to be ubiquinone. Couples the redox reaction to proton translocation (for every two electrons transferred, four hydrogen ions are translocated across the cytoplasmic membrane), and thus conserves the redox energy in a proton gradient. The sequence is that of NADH-quinone oxidoreductase subunit D from Neisseria meningitidis serogroup C (strain 053442).